Consider the following 2150-residue polypeptide: Zinc finger protein sdc-3 (2150 aa).

A dosage compensation domain 1 region spans residues 443-987 (QEITSPMFAL…DQVENEEPER (545 aa)). Disordered stretches follow at residues 874-894 (EKEWHEMRAAQRAQKEKEEED), 1261-1373 (GSVV…GPEV), 1411-1448 (FETSPVPAPEGNIPSRAHSSDDDVQVISSETDPNGPIN), and 1491-1670 (EVLQ…SEKL). Residues 1267–1293 (TNQQEENVTSEGPTLQEGSSIPSSSHI) show a composition bias toward polar residues. Residues 1321–1333 (KKSGKTTRGRPKK) show a composition bias toward basic residues. Residues 1347 to 1357 (GQKEEAAHEPE) are compositionally biased toward basic and acidic residues. Residues 1504–1524 (SSKKRGRRRKKTPPHIAKARK) show a composition bias toward basic residues. Residues 1508-1516 (RGRRRKKTP) are sex determination domain. A compositionally biased stretch (basic and acidic residues) spans 1585–1598 (EDLHETERPGHVGE). Polar residues predominate over residues 1638-1648 (IQSQAGTNASP). 2 consecutive C2H2-type zinc fingers follow at residues 2078–2105 (HKCVQCSIRNQSVYFSSYSLLELHGKLH) and 2117–2141 (DDCQDCYETLTSSFEVIVHRINHHH). The segment at 2080–2105 (CVQCSIRNQSVYFSSYSLLELHGKLH) is dosage compensation domain 2.

Component of the SDC complex, which consists of sdc-1, sdc-2 and sdc-3. Within the complex, interacts with sdc-1 and sdc-2. Interacts with dpy-21. Sumoylated. Sumoylation is important for assembly of the dosage compensation complex and its robust binding to the X chromosome. In terms of tissue distribution, expressed in somatic and in germline tissues in hermaphrodites (XX). In males (XO), only present in embryos younger than the 100-cell stage (at protein level).

Its subcellular location is the chromosome. It is found in the nucleus. Its function is as follows. Component of the SDC complex that functions in sex determination and in X chromosome dosage compensation specifically in hermaphrodite (XX) animals. Plays a central role in the recruitment of the condensin I-like dosage compensation complex to the male sex-determining autosomal gene her-1, thereby contributing to its repression and initiating hermaphrodite sexual development. Involved in the recruitment and assembly of the dosage compensation complex and the dosage compensation protein dpy-21 onto the X chromosomes in hermaphrodites, which leads to a reduction of X-linked gene transcription and an equalization of X-linked gene expression between the sexes. The protein is Zinc finger protein sdc-3 (sdc-3) of Caenorhabditis elegans.